A 670-amino-acid polypeptide reads, in one-letter code: DNA mismatch repair protein MutL (670 aa).

Positions 363–451 (SFDRGRPLSR…RAAGGPASTH (89 aa)) are disordered. A compositionally biased stretch (basic and acidic residues) spans 379-389 (ERWRERHRPDA).

The protein belongs to the DNA mismatch repair MutL/HexB family.

Its function is as follows. This protein is involved in the repair of mismatches in DNA. It is required for dam-dependent methyl-directed DNA mismatch repair. May act as a 'molecular matchmaker', a protein that promotes the formation of a stable complex between two or more DNA-binding proteins in an ATP-dependent manner without itself being part of a final effector complex. The protein is DNA mismatch repair protein MutL of Syntrophobacter fumaroxidans (strain DSM 10017 / MPOB).